Consider the following 329-residue polypeptide: BTB/POZ domain-containing adapter for CUL3-mediated RhoA degradation protein 1 (329 aa).

Positions 1 to 31 (MSAEASGPAPAAAECLESPSPSSVEPGSPSY) are disordered. Positions 41-109 (KYVKLNVGGS…LRDGSVPLPE (69 aa)) constitute a BTB domain.

This sequence belongs to the BACURD family. Homotetramer; forms a two-fold symmetric tetramer in solution. Interacts with CUL3; interaction is direct and forms a 5:5 heterodecamer. Component of the BCR(KCTD13) E3 ubiquitin ligase complex, at least composed of CUL3, KCTD13/BACURD1 and RBX1. Interacts with RHOA; with a preference for RhoA-GDP. Interacts with POLD2 and PCNA. Interacts with SPRTN.

It localises to the nucleus. It functions in the pathway protein modification; protein ubiquitination. Its function is as follows. Substrate-specific adapter of a BCR (BTB-CUL3-RBX1) E3 ubiquitin-protein ligase complex required for synaptic transmission. The BCR(KCTD13) E3 ubiquitin ligase complex mediates the ubiquitination of RHOA, leading to its degradation by the proteasome, thereby regulating the actin cytoskeleton and promoting synaptic transmission. The protein is BTB/POZ domain-containing adapter for CUL3-mediated RhoA degradation protein 1 (Kctd13) of Mus musculus (Mouse).